A 334-amino-acid chain; its full sequence is tRNA N6-adenosine threonylcarbamoyltransferase (334 aa).

Fe cation is bound by residues histidine 107 and histidine 111. Residues 129–133 (LVSGG), aspartate 162, glycine 175, and asparagine 269 each bind substrate. Position 297 (aspartate 297) interacts with Fe cation.

Belongs to the KAE1 / TsaD family. Requires Fe(2+) as cofactor.

Its subcellular location is the cytoplasm. The catalysed reaction is L-threonylcarbamoyladenylate + adenosine(37) in tRNA = N(6)-L-threonylcarbamoyladenosine(37) in tRNA + AMP + H(+). Its function is as follows. Required for the formation of a threonylcarbamoyl group on adenosine at position 37 (t(6)A37) in tRNAs that read codons beginning with adenine. Is involved in the transfer of the threonylcarbamoyl moiety of threonylcarbamoyl-AMP (TC-AMP) to the N6 group of A37, together with TsaE and TsaB. TsaD likely plays a direct catalytic role in this reaction. The sequence is that of tRNA N6-adenosine threonylcarbamoyltransferase from Campylobacter concisus (strain 13826).